Consider the following 155-residue polypeptide: Protein-export protein SecB (155 aa).

This sequence belongs to the SecB family. As to quaternary structure, homotetramer, a dimer of dimers. One homotetramer interacts with 1 SecA dimer.

The protein localises to the cytoplasm. Functionally, one of the proteins required for the normal export of preproteins out of the cell cytoplasm. It is a molecular chaperone that binds to a subset of precursor proteins, maintaining them in a translocation-competent state. It also specifically binds to its receptor SecA. The polypeptide is Protein-export protein SecB (Escherichia fergusonii (strain ATCC 35469 / DSM 13698 / CCUG 18766 / IAM 14443 / JCM 21226 / LMG 7866 / NBRC 102419 / NCTC 12128 / CDC 0568-73)).